Here is a 149-residue protein sequence, read N- to C-terminus: Calmodulin-like protein 3 (149 aa).

4 consecutive EF-hand domains span residues glutamate 8–asparagine 43, proline 44–aspartate 79, aspartate 81–lysine 116, and leucine 117–lysine 149. Ca(2+) contacts are provided by aspartate 21, aspartate 23, aspartate 25, serine 27, glutamate 32, aspartate 57, aspartate 59, asparagine 61, threonine 63, glutamate 68, aspartate 94, aspartate 96, asparagine 98, glutamate 105, aspartate 130, aspartate 132, aspartate 134, glutamine 136, and glutamate 141.

This sequence belongs to the calmodulin family. In terms of assembly, interacts with MYO10, the interaction is calcium-dependent and essential for MYO10 function in filopodial extension.

In terms of biological role, may function as a specific light chain of unconventional myosin-10 (MYO10), also enhances MYO10 translation, possibly by acting as a chaperone for the emerging MYO10 heavy chain protein. May compete with calmodulin by binding, with different affinities, to cellular substrates. In Mus musculus (Mouse), this protein is Calmodulin-like protein 3 (Calml3).